The sequence spans 1523 residues: Dicer-like protein 1 (1523 aa).

Residues 24-38 are compositionally biased toward polar residues; the sequence is LNLSGERTISTTEPT. A disordered region spans residues 24–58; it reads LNLSGERTISTTEPTEGNDSSSEESGDNEQISTQR. The Helicase ATP-binding domain maps to 123–304; that stretch reads LFERAKSQNT…ESATKLEVLL (182 aa). ATP is bound at residue 136–143; the sequence is LDTGSGKT. The DEAH box motif lies at 249–252; the sequence is DEAH. The 174-residue stretch at 444–617 folds into the Helicase C-terminal domain; sequence LLRQKLIKYF…GIDSEIDSIL (174 aa). A Dicer dsRNA-binding fold domain is found at 640–730; that stretch reads ALAILARYAS…NSVYHRRLPA (91 aa). The PAZ domain occupies 879-1007; it reads ELLHLVHENE…VCIEPLRISA (129 aa). RNase III domains follow at residues 1031 to 1190 and 1241 to 1392; these read IALE…LSGG and GRKV…VDSD. Mg(2+)-binding residues include E1281, D1378, and E1381. The DRBM domain maps to 1426–1494; the sequence is TFLQNRLTNE…SEKALSVLEN (69 aa). C1438, H1465, C1506, and C1508 together coordinate Zn(2+).

The protein belongs to the helicase family. Dicer subfamily. Requires Mg(2+) as cofactor. Mn(2+) serves as cofactor.

Dicer-like endonuclease involved in cleaving double-stranded RNA in the RNA interference (RNAi) pathway. Produces 21 to 25 bp dsRNAs (siRNAs) which target the selective destruction of homologous RNAs leading to sequence-specific suppression of gene expression, called post-transcriptional gene silencing (PTGS). Part of a broad host defense response against viral infection and transposons. This Aspergillus oryzae (strain ATCC 42149 / RIB 40) (Yellow koji mold) protein is Dicer-like protein 1 (dcl1).